Reading from the N-terminus, the 639-residue chain is Signal recognition particle receptor subunit alpha (639 aa).

The interval 132–317 is disordered; it reads APTTMKKFED…STKPSATKGT (186 aa). 2 stretches are compositionally biased toward basic and acidic residues: residues 137-146 and 153-165; these read KKFEDSEKAK and IETRGEKPKEKAK. S178 carries the post-translational modification Phosphoserine. Positions 204–240 are enriched in basic and acidic residues; sequence ELSKEEQIRRKREEFIQKHGRGMEKSSKSSKSDAPKE. T285 bears the Phosphothreonine mark. 3 positions are modified to phosphoserine: S297, S298, and S299. Positions 305–315 are enriched in polar residues; that stretch reads AQNSTKPSATK. An NG domain region spans residues 420 to 637; it reads YVVTFCGVNG…NAKAVVAALM (218 aa). 426 to 433 is a GTP binding site; the sequence is GVNGVGKS. Position 474 is a phosphoserine (S474). A GTP-binding site is contributed by 521-525; it reads DTAGR. A Phosphothreonine modification is found at T579. 589 to 592 provides a ligand contact to GTP; that stretch reads TKFD.

The protein belongs to the GTP-binding SRP family. In terms of assembly, heterodimer with SRPRB. Interacts with the signal recognition particle (SRP) complex subunit SRP54.

It localises to the endoplasmic reticulum membrane. Component of the SRP (signal recognition particle) receptor. Ensures, in conjunction with the signal recognition particle, the correct targeting of the nascent secretory proteins to the endoplasmic reticulum membrane system. Forms a guanosine 5'-triphosphate (GTP)-dependent complex with the SRP subunit SRP54. SRP receptor compaction and GTPase rearrangement drive SRP-mediated cotranslational protein translocation into the ER. The protein is Signal recognition particle receptor subunit alpha of Bos taurus (Bovine).